Consider the following 1034-residue polypeptide: Integrin alpha-V (1034 aa).

A signal peptide spans Met1–Ala19. Residues Phe20–Val978 are Extracellular-facing. FG-GAP repeat units follow at residues Asn21–Gln86, Asp97–Ala158, Arg161–Tyr213, Gln225–Met279, Ser280–Gln345, Ile346–Ala403, and Arg407–Thr470. An N-linked (GlcNAc...) asparagine glycan is attached at Asn62. Cystine bridges form between Cys77-Cys85, Cys126-Cys146, and Cys160-Cys173. Residues Asp248, Asp252, Ile254, and Asp256 each contribute to the Ca(2+) site. N-linked (GlcNAc...) asparagine glycosylation is found at Asn278 and Asn284. Ca(2+) is bound by residues Asp302, Asn304, Asp306, Tyr308, Asp310, Asp367, Asp369, Asp371, Phe373, Asp375, Asp431, Asp433, Asn435, Tyr437, and Asp439. Cystine bridges form between Cys479-Cys488 and Cys494-Cys551. N-linked (GlcNAc...) asparagine glycosylation is found at Asn540 and Asn601. 2 disulfides stabilise this stretch: Cys612-Cys618 and Cys684-Cys697. Residues Asn690, Asn821, Asn837, and Asn860 are each glycosylated (N-linked (GlcNAc...) asparagine). 2 cysteine pairs are disulfide-bonded: Cys838–Cys900 and Cys890–Cys895. N-linked (GlcNAc...) asparagine glycosylation is found at Asn931, Asn951, Asn959, and Asn966. The helical transmembrane segment at Pro979–Tyr1002 threads the bilayer. The Cytoplasmic segment spans residues Arg1003–Ala1034. The GFFKR motif motif lies at Gly1005–Arg1009. Basic and acidic residues predominate over residues Pro1013–Gly1028. Positions Pro1013 to Ala1034 are disordered.

It belongs to the integrin alpha chain family. As to quaternary structure, heterodimer of an alpha and a beta subunit. The alpha subunit is composed of a heavy and a light chain linked by a disulfide bond. Alpha-V (ITGAV) associates with either beta-1 (ITGB1), beta-3 (ITGB3), beta-5 (ITGB5), beta-6 (ITGB6) or beta-8 (ITGB8). Interacts with RAB25. Interacts with CIB1. Integrins ITGAV:ITGB3 and ITGAV:ITGB5 interact with FBLN5 (via N-terminus). ITGAV:ITGB3 and ITGAV:ITGB5 interact with CCN3. ITGAV:ITGB3 interacts with ADGRA2. ITGAV:ITGB3 interacts with FGF2; it is likely that FGF2 can simultaneously bind ITGAV:ITGB3 and FGF receptors. ITGAV:ITGB3 is found in a ternary complex with CX3CR1 and CX3CL1. ITGAV:ITGB3 is found in a ternary complex with NRG1 and ERBB3. ITGAV:ITGB3 is found in a ternary complex with FGF1 and FGFR1. ITGAV:ITGB3 is found in a ternary complex with IGF1 and IGF1R. ITGAV:ITGB3 interacts with IGF2. ITGAV:ITGB3 and ITGAV:ITGB6 interact with FBN1. ITGAV:ITGB3 interacts with CD9, CD81 and CD151 (via second extracellular domain). ITGAV:ITGB6 interacts with TGFB1.

It is found in the membrane. The protein localises to the cell junction. Its subcellular location is the focal adhesion. Its function is as follows. The alpha-V (ITGAV) integrins are receptors for vitronectin, cytotactin, fibronectin, fibrinogen, laminin, matrix metalloproteinase-2, osteopontin, osteomodulin, prothrombin, thrombospondin, TGFB1 and vWF. They recognize the sequence R-G-D in a wide array of ligands. Alpha-V integrins may play a role in embryo implantation, angiogenesis and wound healing. ITGAV:ITGB3 binds to fractalkine (CX3CL1) and may act as its coreceptor in CX3CR1-dependent fractalkine signaling. ITGAV:ITGB3 binds to NRG1 (via EGF domain) and this binding is essential for NRG1-ERBB signaling. ITGAV:ITGB3 binds to FGF1 and this binding is essential for FGF1 signaling. ITGAV:ITGB3 binds to FGF2 and this binding is essential for FGF2 signaling. ITGAV:ITGB3 binds to IGF1 and this binding is essential for IGF1 signaling. ITGAV:ITGB3 binds to IGF2 and this binding is essential for IGF2 signaling. ITGAV:ITGB3 binds to IL1B and this binding is essential for IL1B signaling. ITGAV:ITGB3 binds to PLA2G2A via a site (site 2) which is distinct from the classical ligand-binding site (site 1) and this induces integrin conformational changes and enhanced ligand binding to site 1. ITGAV:ITGB3 and ITGAV:ITGB6 act as receptors for fibrillin-1 (FBN1) and mediate R-G-D-dependent cell adhesion to FBN1. Integrin alpha-V/beta-6 or alpha-V/beta-8 (ITGAV:ITGB6 or ITGAV:ITGB8) mediates R-G-D-dependent release of transforming growth factor beta-1 (TGF-beta-1) from regulatory Latency-associated peptide (LAP), thereby playing a key role in TGF-beta-1 activation. ITGAV:ITGB3 acts as a receptor for CD40LG. ITGAV:ITGB3 acts as a receptor for IBSP and promotes cell adhesion and migration to IBSP. The protein is Integrin alpha-V (ITGAV) of Gallus gallus (Chicken).